The primary structure comprises 179 residues: Ribosome-recycling factor (179 aa).

This sequence belongs to the RRF family.

The protein localises to the cytoplasm. Its function is as follows. Responsible for the release of ribosomes from messenger RNA at the termination of protein biosynthesis. May increase the efficiency of translation by recycling ribosomes from one round of translation to another. The sequence is that of Ribosome-recycling factor from Chlamydia trachomatis serovar A (strain ATCC VR-571B / DSM 19440 / HAR-13).